Reading from the N-terminus, the 76-residue chain is MSIEERVKKIIVEQLGVKEEDVKPEASFVEDLGADSLDTVELVMALEEEFDIEIPDEEAEKITTVQSAIDYVQNNQ.

The Carrier domain occupies 1 to 76 (MSIEERVKKI…SAIDYVQNNQ (76 aa)). Position 36 is an O-(pantetheine 4'-phosphoryl)serine (Ser-36).

This sequence belongs to the acyl carrier protein (ACP) family. In terms of processing, 4'-phosphopantetheine is transferred from CoA to a specific serine of apo-ACP by AcpS. This modification is essential for activity because fatty acids are bound in thioester linkage to the sulfhydryl of the prosthetic group.

It is found in the cytoplasm. Its pathway is lipid metabolism; fatty acid biosynthesis. Its function is as follows. Carrier of the growing fatty acid chain in fatty acid biosynthesis. The chain is Acyl carrier protein from Haemophilus influenzae (strain 86-028NP).